A 185-amino-acid polypeptide reads, in one-letter code: Large ribosomal subunit protein uL22 (185 aa).

It belongs to the universal ribosomal protein uL22 family. In terms of assembly, part of the 50S ribosomal subunit.

In terms of biological role, this protein binds specifically to 23S rRNA. It makes multiple contacts with different domains of the 23S rRNA in the assembled 50S subunit and ribosome. Its function is as follows. The globular domain of the protein is located near the polypeptide exit tunnel on the outside of the subunit, while an extended beta-hairpin is found that lines the wall of the exit tunnel in the center of the 70S ribosome. This is Large ribosomal subunit protein uL22 from Pyrobaculum neutrophilum (strain DSM 2338 / JCM 9278 / NBRC 100436 / V24Sta) (Thermoproteus neutrophilus).